The primary structure comprises 508 residues: Small ribosomal subunit protein uS3m (508 aa).

Belongs to the universal ribosomal protein uS3 family. In terms of assembly, component of the mitochondrial small ribosomal subunit (mt-SSU). Mature N.crassa 74S mitochondrial ribosomes consist of a small (37S) and a large (54S) subunit. The 37S small subunit contains a 16S ribosomal RNA (16S mt-rRNA) and 32 different proteins. The 54S large subunit contains a 23S rRNA (23S mt-rRNA) and 42 different proteins. uS3m, uS4m and uS5m form the narrow entry site of the mRNA channel.

Its subcellular location is the mitochondrion. In terms of biological role, component of the mitochondrial ribosome (mitoribosome), a dedicated translation machinery responsible for the synthesis of mitochondrial genome-encoded proteins, including at least some of the essential transmembrane subunits of the mitochondrial respiratory chain. The mitoribosomes are attached to the mitochondrial inner membrane and translation products are cotranslationally integrated into the membrane. uS3m is essential for mitochondrial protein synthesis and required for the maturation of small ribosomal subunits. This chain is Small ribosomal subunit protein uS3m (var1), found in Neurospora crassa (strain ATCC 24698 / 74-OR23-1A / CBS 708.71 / DSM 1257 / FGSC 987).